We begin with the raw amino-acid sequence, 277 residues long: S-formylglutathione hydrolase FrmB (277 aa).

Residues S145, D221, and H254 each act as charge relay system in the active site.

Belongs to the esterase D family.

The catalysed reaction is S-formylglutathione + H2O = formate + glutathione + H(+). Its function is as follows. Serine hydrolase involved in the detoxification of formaldehyde. Hydrolyzes S-formylglutathione to glutathione and formate. This Escherichia coli O1:K1 / APEC protein is S-formylglutathione hydrolase FrmB (frmB).